Consider the following 434-residue polypeptide: ATP-dependent protease ATPase subunit HslU (434 aa).

Residues valine 18, 60 to 65 (GVGKTE), aspartate 247, glutamate 312, and arginine 384 contribute to the ATP site.

Belongs to the ClpX chaperone family. HslU subfamily. In terms of assembly, a double ring-shaped homohexamer of HslV is capped on each side by a ring-shaped HslU homohexamer. The assembly of the HslU/HslV complex is dependent on binding of ATP.

It localises to the cytoplasm. ATPase subunit of a proteasome-like degradation complex; this subunit has chaperone activity. The binding of ATP and its subsequent hydrolysis by HslU are essential for unfolding of protein substrates subsequently hydrolyzed by HslV. HslU recognizes the N-terminal part of its protein substrates and unfolds these before they are guided to HslV for hydrolysis. The protein is ATP-dependent protease ATPase subunit HslU of Bradyrhizobium diazoefficiens (strain JCM 10833 / BCRC 13528 / IAM 13628 / NBRC 14792 / USDA 110).